A 698-amino-acid polypeptide reads, in one-letter code: RNA cytosine-C(5)-methyltransferase NSUN2 (698 aa).

Positions 1–10 (MGRKNRRNRQ) are enriched in basic residues. Residues 1 to 28 (MGRKNRRNRQRRTEQRSPAEEERRKARE) are disordered. Over residues 11–28 (RRTEQRSPAEEERRKARE) the composition is skewed to basic and acidic residues. Residues 182–188 (CAAPGSK), Asp213, Asp240, and Asp266 each bind S-adenosyl-L-methionine. The Nucleophile role is filled by Cys319. The disordered stretch occupies residues 472–496 (AVDAENGETKPCTNQSGSSKTDSVC). The segment covering 482–493 (PCTNQSGSSKTD) has biased composition (polar residues).

Belongs to the class I-like SAM-binding methyltransferase superfamily. RsmB/NOP family. TRM4 subfamily.

The protein localises to the nucleus. The protein resides in the nucleolus. It is found in the cytoplasm. Its subcellular location is the mitochondrion. It localises to the cytoskeleton. The protein localises to the spindle. The protein resides in the secreted. It is found in the extracellular exosome. It catalyses the reaction cytidine(48) in tRNA + S-adenosyl-L-methionine = 5-methylcytidine(48) in tRNA + S-adenosyl-L-homocysteine + H(+). The enzyme catalyses cytidine(49) in tRNA + S-adenosyl-L-methionine = 5-methylcytidine(49) in tRNA + S-adenosyl-L-homocysteine + H(+). The catalysed reaction is cytidine(50) in tRNA + S-adenosyl-L-methionine = 5-methylcytidine(50) in tRNA + S-adenosyl-L-homocysteine + H(+). It carries out the reaction cytidine(34) in tRNA precursor + S-adenosyl-L-methionine = 5-methylcytidine(34) in tRNA precursor + S-adenosyl-L-homocysteine + H(+). It catalyses the reaction a cytidine in mRNA + S-adenosyl-L-methionine = a 5-methylcytidine in mRNA + S-adenosyl-L-homocysteine + H(+). Its function is as follows. RNA cytosine C(5)-methyltransferase that methylates cytosine to 5-methylcytosine (m5C) in various RNAs, such as tRNAs, mRNAs and some long non-coding RNAs (lncRNAs). Involved in various processes, such as epidermal stem cell differentiation, testis differentiation and maternal to zygotic transition during early development: acts by increasing protein synthesis; cytosine C(5)-methylation promoting tRNA stability and preventing mRNA decay. Methylates cytosine to 5-methylcytosine (m5C) at positions 34 and 48 of intron-containing tRNA(Leu)(CAA) precursors, and at positions 48, 49 and 50 of tRNA(Gly)(GCC) precursors. tRNA methylation is required generation of RNA fragments derived from tRNAs (tRFs). Also mediates C(5)-methylation of mitochondrial tRNAs. Catalyzes cytosine C(5)-methylation of mRNAs, leading to stabilize them and prevent mRNA decay. Cytosine C(5)-methylation of mRNAs also regulates mRNA export. Also mediates cytosine C(5)-methylation of non-coding RNAs, such as vault RNAs (vtRNAs), promoting their processing into regulatory small RNAs. Required for proper spindle assembly and chromosome segregation, independently of its methyltransferase activity. This is RNA cytosine-C(5)-methyltransferase NSUN2 from Xenopus laevis (African clawed frog).